A 99-amino-acid chain; its full sequence is uncharacterized protein (99 aa).

2 disordered regions span residues 1–24 (MKAT…VRAT) and 49–99 (SVRT…RCAT). Composition is skewed to basic residues over residues 15–24 (VRRRRRVRAT) and 71–81 (SRRRGRPRSSR).

This is an uncharacterized protein from Streptomyces fradiae (Streptomyces roseoflavus).